The chain runs to 568 residues: SLAIN motif-containing protein 1 (568 aa).

Disordered regions lie at residues Met1–Val22, Leu59–Ala92, Gly139–Pro162, Tyr235–Glu256, and Ser291–Ser403. The stretch at Pro21–Ala56 forms a coiled coil. Residues Leu62–Gly74 are compositionally biased toward pro residues. Residues Leu75–Ala92 are compositionally biased toward low complexity. The span at Gly139–Thr149 shows a compositional bias: gly residues. The span at Tyr235–Gln245 shows a compositional bias: polar residues. Ser243 is subject to Phosphoserine. Composition is skewed to low complexity over residues Ser246–Ser255 and Ser291–Ser307. Over residues Gln316 to Phe329 the composition is skewed to acidic residues. Low complexity predominate over residues Ser366–Gln384. Residues Ala385–Thr395 show a composition bias toward polar residues. An asymmetric dimethylarginine mark is found at Arg471 and Arg543.

The protein belongs to the SLAIN motif-containing family. As to quaternary structure, interacts with MAPRE1, MAPRE2, MAPRE3 and CKAP5. Interacts with ZDHHC17 (via ANK repeats). In terms of tissue distribution, expressed in embryonic stem cells. Expressed in brain.

The protein resides in the cytoplasm. It localises to the cytoskeleton. In terms of biological role, microtubule plus-end tracking protein that might be involved in the regulation of cytoplasmic microtubule dynamics, microtubule organization and microtubule elongation. This chain is SLAIN motif-containing protein 1 (SLAIN1), found in Homo sapiens (Human).